Reading from the N-terminus, the 239-residue chain is Probable transcriptional regulatory protein BCQ_0605 (239 aa).

The protein belongs to the TACO1 family. YeeN subfamily.

It localises to the cytoplasm. This Bacillus cereus (strain Q1) protein is Probable transcriptional regulatory protein BCQ_0605.